The sequence spans 343 residues: Fructose-1,6-bisphosphatase class 1 (343 aa).

Residues E90, D109, L111, and D112 each coordinate Mg(2+). Residues 112 to 115 (DGSS) and N199 each bind substrate. Position 271 (E271) interacts with Mg(2+).

This sequence belongs to the FBPase class 1 family. As to quaternary structure, homotetramer. Requires Mg(2+) as cofactor.

Its subcellular location is the cytoplasm. It carries out the reaction beta-D-fructose 1,6-bisphosphate + H2O = beta-D-fructose 6-phosphate + phosphate. Its pathway is carbohydrate biosynthesis; Calvin cycle. The sequence is that of Fructose-1,6-bisphosphatase class 1 from Rhodopseudomonas palustris (strain HaA2).